The sequence spans 117 residues: MLNELSTRKCTPCQGGMPALDRSEAERYLSQAPGWSLADNGSRIERHYSFRDYRSALRFVVDLSQLAEDEGHHPDISFGWGHATVSWQTKKIKGLHENDFIMAAKTDQIAGDGNGSA.

This sequence belongs to the pterin-4-alpha-carbinolamine dehydratase family.

The enzyme catalyses (4aS,6R)-4a-hydroxy-L-erythro-5,6,7,8-tetrahydrobiopterin = (6R)-L-erythro-6,7-dihydrobiopterin + H2O. The polypeptide is Putative pterin-4-alpha-carbinolamine dehydratase (Azoarcus sp. (strain BH72)).